Reading from the N-terminus, the 317-residue chain is Transcription initiation factor IIB 3 (317 aa).

Over residues 1 to 14 the composition is skewed to basic and acidic residues; it reads MERATREREKEQRE. The disordered stretch occupies residues 1–25; sequence MERATREREKEQREQAQTNDEAQQC. Residues 21 to 50 form a TFIIB-type zinc finger; that stretch reads EAQQCPECNSANVITDQSERVCEDCGLVLE. Residues cysteine 25, cysteine 28, cysteine 42, and cysteine 45 each coordinate Zn(2+). Residues 62-83 form a disordered region; the sequence is AFNSSERDQKSRVGAPTTKTMH. Repeat copies occupy residues 136 to 219 and 230 to 311.

The protein belongs to the TFIIB family.

Its function is as follows. Stabilizes TBP binding to an archaeal box-A promoter. Also responsible for recruiting RNA polymerase II to the pre-initiation complex (DNA-TBP-TFIIB). In Halobacterium salinarum (strain ATCC 700922 / JCM 11081 / NRC-1) (Halobacterium halobium), this protein is Transcription initiation factor IIB 3.